The chain runs to 571 residues: Decapping 5-like protein (571 aa).

The segment covering 1–17 has biased composition (low complexity); sequence MASESSQSSSPSSSQPP. Disordered stretches follow at residues 1 to 27, 102 to 141, 159 to 187, and 258 to 305; these read MASE…SPGN, LQVN…ISGY, LSSK…GSLT, and SQVV…SEAQ. A Sm domain is found at 25–108; it reads PGNNVGDTFI…IKDLQVNPSP (84 aa). Composition is skewed to polar residues over residues 104 to 138 and 167 to 187; these read VNPS…SSPI and TQHS…GSLT. Low complexity predominate over residues 264–279; that stretch reads SPDVSSNQSYSSNPSP. A compositionally biased stretch (polar residues) spans 293–305; that stretch reads SVSSNLSPPSEAQ. The region spanning 419–455 is the DFDF domain; that stretch reads RIPSSSIEYTEEFDFEAMNEKFKKSELWGYLGRNNQR. Positions 474 to 489 match the FFD box motif; it reads PAYNKDDFFDTISCNQ. The short motif at 498 to 518 is the TFG box element; it reads QQHNQFPEHMRQVPEAFGNNF.

This sequence belongs to the LSM14 family. As to quaternary structure, homodimer. Component of the decapping complex.

The protein resides in the cytoplasm. It is found in the P-body. Functionally, as a component of the decapping complex, involved in the degradation of mRNAs. Promotes P-body formation. Translational repressor. In Arabidopsis thaliana (Mouse-ear cress), this protein is Decapping 5-like protein (DCP5-L).